The primary structure comprises 250 residues: 2,5-dichloro-2,5-cyclohexadiene-1,4-diol dehydrogenase (250 aa).

9–34 is an NAD(+) binding site; it reads IIVTGGGSGIGRATVELLVASGANVA. Ser141 is a binding site for substrate. Tyr154 functions as the Proton acceptor in the catalytic mechanism.

The protein belongs to the short-chain dehydrogenases/reductases (SDR) family.

It catalyses the reaction 2,5-dichlorocyclohexa-2,5-dien-1,4-diol + NAD(+) = 2,5-dichlorohydroquinone + NADH + H(+). The protein operates within xenobiotic degradation; gamma-hexachlorocyclohexane degradation. Functionally, catalyzes the dehydrogenation of 2,5-dichloro-2,5-cyclohexadiene-1,4-diol (2,5-DDOL) to 2,5-dichlorohydroquinone (2,5-DCHQ), a step in the degradation of gamma-hexachlorocyclohexane (gamma-HCH or lindane). This Sphingobium indicum (strain DSM 16412 / CCM 7286 / MTCC 6364 / B90A) protein is 2,5-dichloro-2,5-cyclohexadiene-1,4-diol dehydrogenase.